The primary structure comprises 212 residues: Eukaryotic translation initiation factor 4E-1 (212 aa).

Cys-125 and Cys-129 are disulfide-bonded.

It belongs to the eukaryotic initiation factor 4E family. As to quaternary structure, EIF4F is a multi-subunit complex, the composition of which varies with external and internal environmental conditions. It is composed of at least EIF4A, EIF4E and EIF4G. EIF4E is also known to interact with other partners, including pgl-1. Interacts with ifet-1. Enriched in the germline from L3 larvae to adults; regions of the gonad undergoing spermatogenesis. Expressed in germ granules (P granules); when associated with pgl-1.

The protein localises to the cytoplasm. Its function is as follows. Recognizes and binds the 7-methylguanosine-containing mRNA cap during an early step in the initiation of protein synthesis and facilitates ribosome binding by inducing the unwinding of the mRNAs secondary structures. All 5 eIF4E proteins bind monomethyl cap structures. Only ife-1, ife-2 and ife-5 bind trimethyl cap structures which result from trans-splicing. Translation of trimethyl cap structure mRNAs may be regulated by intracellular redox state; disulfide bonds change the width and depth of the cap-binding cavity determining selectivity to mRNA caps. Required for progression through meiotic divisions during spermatogenesis and for the production of viable sperm. It is not required during oogenesis. The protein is Eukaryotic translation initiation factor 4E-1 (ife-1) of Caenorhabditis elegans.